A 34-amino-acid polypeptide reads, in one-letter code: Photosystem II reaction center protein Psb30 (34 aa).

The helical transmembrane segment at 6 to 26 threads the bilayer; that stretch reads VIGQLLSATLIVLAGPAVIFV.

This sequence belongs to the Psb30/Ycf12 family. PSII is composed of 1 copy each of membrane proteins PsbA, PsbB, PsbC, PsbD, PsbE, PsbF, PsbH, PsbI, PsbJ, PsbK, PsbL, PsbM, PsbT, PsbX, PsbY, PsbZ, Psb30/Ycf12, peripheral proteins of the oxygen-evolving complex and a large number of cofactors. It forms dimeric complexes.

It is found in the plastid. It localises to the chloroplast thylakoid membrane. Its function is as follows. A core subunit of photosystem II (PSII), probably helps stabilize the reaction center. This is Photosystem II reaction center protein Psb30 from Heterosigma akashiwo (strain NIES-293 / 8280G21-1).